A 146-amino-acid polypeptide reads, in one-letter code: Globin (146 aa).

Ala1 bears the N-acetylalanine mark. Positions 1 to 146 (ALSAAEAEVV…IIDAMKKAGK (146 aa)) constitute a Globin domain. Heme b is bound at residue His95.

The protein belongs to the globin family. Monomer.

The polypeptide is Globin (Dolabella auricularia (Shoulderblade sea cat)).